The primary structure comprises 328 residues: Phosphate acyltransferase (328 aa).

The protein belongs to the PlsX family. In terms of assembly, homodimer. Probably interacts with PlsY.

The protein localises to the cytoplasm. It catalyses the reaction a fatty acyl-[ACP] + phosphate = an acyl phosphate + holo-[ACP]. It participates in lipid metabolism; phospholipid metabolism. Its function is as follows. Catalyzes the reversible formation of acyl-phosphate (acyl-PO(4)) from acyl-[acyl-carrier-protein] (acyl-ACP). This enzyme utilizes acyl-ACP as fatty acyl donor, but not acyl-CoA. The protein is Phosphate acyltransferase of Staphylococcus aureus (strain MRSA252).